The following is a 383-amino-acid chain: N-acetyldiaminopimelate deacetylase (383 aa).

D72 is a catalytic residue. The active-site Proton acceptor is the E131.

It belongs to the peptidase M20A family. N-acetyldiaminopimelate deacetylase subfamily.

The enzyme catalyses N-acetyl-(2S,6S)-2,6-diaminopimelate + H2O = (2S,6S)-2,6-diaminopimelate + acetate. The protein operates within amino-acid biosynthesis; L-lysine biosynthesis via DAP pathway; LL-2,6-diaminopimelate from (S)-tetrahydrodipicolinate (acetylase route): step 3/3. Catalyzes the conversion of N-acetyl-diaminopimelate to diaminopimelate and acetate. This is N-acetyldiaminopimelate deacetylase from Lacticaseibacillus casei (strain BL23) (Lactobacillus casei).